A 451-amino-acid polypeptide reads, in one-letter code: Tetraspanin-14 (451 aa).

Topologically, residues 1–56 (MPHRAPRRFMKTAPGACDWEQCLLMGSGEPTRARAVVSSSHKQRKPRQEISACLKW) are cytoplasmic. The short motif at 20-24 (EQCLL) is the Basolateral membrane targeting element. The chain crosses the membrane as a helical span at residues 57-77 (LVFLLNSIVFLVGVGILALGV). At 78–96 (YLFIKDFREVKLVDIILNP) the chain is on the extracellular side. The chain crosses the membrane as a helical span at residues 97–117 (AILISIFGFSICVVSFFGFMG). Over 118 to 130 (ALRDNIFLLKCFA) the chain is Cytoplasmic. A helical transmembrane segment spans residues 131–151 (ACVFLSYILVVAVTLVFFTLF). The Extracellular segment spans residues 152–285 (YTDTTEGLSA…QPLRTLFESH (134 aa)). Asparagine 205 and asparagine 211 each carry an N-linked (GlcNAc...) asparagine glycan. A helical transmembrane segment spans residues 286–306 (AVHVGAFVALLIVPVCISVCL). The Cytoplasmic segment spans residues 307–451 (TNILAKQVDH…TDLVPQKSKS (145 aa)). A disordered region spans residues 328 to 451 (NDRRRKRDHN…TDLVPQKSKS (124 aa)). A compositionally biased stretch (pro residues) spans 366 to 376 (PDIPPPLPPIE). Positions 410–434 (ATTTRTPPAAAGPAPTPQATTTNRT) are enriched in low complexity. The span at 435–444 (HQWVLQQTDL) shows a compositional bias: polar residues.

It belongs to the tetraspanin (TM4SF) family. Expressed in the germline, particularly in sperm cells. As to expression, expressed in the germline (particularly in sperm cells), anterior sensory cilia, hypodermis and vulva (at protein level). In terms of tissue distribution, expressed in the pharynx, hypodermis and vulva (at protein level).

Its subcellular location is the cell membrane. The protein localises to the cytoplasmic vesicle membrane. It localises to the endosome membrane. The protein resides in the early endosome membrane. It is found in the late endosome membrane. Its subcellular location is the recycling endosome membrane. The protein localises to the apical cell membrane. It localises to the basolateral cell membrane. Functionally, functions redundantly with tsp-12 to regulate cell surface levels of the BMP type II receptor daf-4 (but not BMP type I receptor sma-6), probably by regulating endosomal sorting and recycling of receptors, preventing their targeting to degradative lysosomes. Together with tsp-12, regulates cell fate specification in the postembryonic mesodermal M lineage, body size, male development and vulva development, probably by positively modulating BMP-like Sma/Mab signaling. Together with tsp-12 involved in maintaining the structural and functional integrity of the endosomal network. Together with tsp-12, probably acts by modulating the activation of glp-1, Notch-like receptor, to regulate germline maturation. In terms of biological role, functions redundantly with tsp-12 to regulate cell fate specification in the postembryonic mesodermal M lineage, body size, embryonic and vulva development. Functions redundantly with tsp-12 to regulate cell fate specification in the postembryonic mesodermal M lineage. Likely plays a complementary role in mesodermal development with tsp-14 isoform a, but may be more critical. This Caenorhabditis elegans protein is Tetraspanin-14.